We begin with the raw amino-acid sequence, 370 residues long: Death-associated protein kinase 2 (370 aa).

The 263-residue stretch at 23–285 (YDIGEELGSG…IQEALRHPWI (263 aa)) folds into the Protein kinase domain. ATP-binding positions include 29-37 (LGSGQFAIV) and Lys-52. Asp-149 serves as the catalytic Proton acceptor. Residues 277 to 344 (QEALRHPWIT…KVHLRPDEDL (68 aa)) are calmodulin-binding. The autoinhibitory domain stretch occupies residues 292-301 (QAMVRRESVV). Ser-299 carries the post-translational modification Phosphoserine. Ser-318 is modified (phosphoserine; by autocatalysis). The tract at residues 348–370 (ESDTEEDIARRKALHPRRRSSTS) is disordered. Ser-349 bears the Phosphoserine mark. Positions 358-370 (RKALHPRRRSSTS) are enriched in basic residues. Thr-369 is subject to Phosphothreonine; by PKB/AKT1.

The protein belongs to the protein kinase superfamily. CAMK Ser/Thr protein kinase family. DAP kinase subfamily. As to quaternary structure, homodimer in its autoinhibited state. Active as monomer. Isoform 2 but not isoform 1 can interact with ATF4. Interacts with 14-3-3 proteins YWHAB, YWHAE, YWHAG, YWHAH, YWHAQ, YWHAZ and SFN; the interaction requires DAPK2 phosphorylation at Thr-369 and suppresses DAPK2 kinase activity and DAPK2-induced apoptosis. Requires Mg(2+) as cofactor. In terms of processing, autophosphorylation at Ser-318 inhibits its catalytic activity. Dephosphorylated at Ser-318 in response to activated Fas and TNF-alpha receptors. In terms of tissue distribution, expressed in neutrophils and eosinophils. Isoform 2 is expressed in embryonic stem cells (at protein level). Isoform 1 is ubiquitously expressed in all tissue types examined with high levels in heart, lung and skeletal muscle.

The protein localises to the cytoplasm. It is found in the cytoplasmic vesicle. It localises to the autophagosome lumen. It carries out the reaction L-seryl-[protein] + ATP = O-phospho-L-seryl-[protein] + ADP + H(+). It catalyses the reaction L-threonyl-[protein] + ATP = O-phospho-L-threonyl-[protein] + ADP + H(+). Activated by Ca(2+)/calmodulin. Regulated by a double locking mechanism, involving autophosphorylation at Ser-318, calmodulin binding, and dimerization. In the inactive state, Ser-318 is phosphorylated, and the kinase is dimeric. Activation involves: dephosphorylation at Ser-318, release-of-autoinhibition mechanism where calmodulin binding induces a conformational change that relieves the steric block of the active site by the autoinhibitory domain, and generation of the monomeric active form of the kinase. Its function is as follows. Calcium/calmodulin-dependent serine/threonine kinase involved in multiple cellular signaling pathways that trigger cell survival, apoptosis, and autophagy. Regulates both type I apoptotic and type II autophagic cell death signals, depending on the cellular setting. The former is caspase-dependent, while the latter is caspase-independent and is characterized by the accumulation of autophagic vesicles. Acts as a mediator of anoikis and a suppressor of beta-catenin-dependent anchorage-independent growth of malignant epithelial cells. May play a role in granulocytic maturation. Regulates granulocytic motility by controlling cell spreading and polarization. Isoform 2 is not regulated by calmodulin. It can phosphorylate MYL9. It can induce membrane blebbing and autophagic cell death. This Homo sapiens (Human) protein is Death-associated protein kinase 2 (DAPK2).